A 326-amino-acid polypeptide reads, in one-letter code: Acetyl-coenzyme A carboxylase carboxyl transferase subunit alpha (326 aa).

Positions 44-298 constitute a CoA carboxyltransferase C-terminal domain; the sequence is KLETRAMQLR…KQALLDNLDE (255 aa).

It belongs to the AccA family. Acetyl-CoA carboxylase is a heterohexamer composed of biotin carboxyl carrier protein (AccB), biotin carboxylase (AccC) and two subunits each of ACCase subunit alpha (AccA) and ACCase subunit beta (AccD).

The protein localises to the cytoplasm. The catalysed reaction is N(6)-carboxybiotinyl-L-lysyl-[protein] + acetyl-CoA = N(6)-biotinyl-L-lysyl-[protein] + malonyl-CoA. Its pathway is lipid metabolism; malonyl-CoA biosynthesis; malonyl-CoA from acetyl-CoA: step 1/1. Component of the acetyl coenzyme A carboxylase (ACC) complex. First, biotin carboxylase catalyzes the carboxylation of biotin on its carrier protein (BCCP) and then the CO(2) group is transferred by the carboxyltransferase to acetyl-CoA to form malonyl-CoA. The polypeptide is Acetyl-coenzyme A carboxylase carboxyl transferase subunit alpha (Nostoc sp. (strain PCC 7120 / SAG 25.82 / UTEX 2576)).